Here is a 191-residue protein sequence, read N- to C-terminus: Inosine triphosphate pyrophosphatase (191 aa).

15–20 (TGNANK) is an ITP binding site. E43 lines the Mg(2+) pocket. ITP is bound by residues K55, 71 to 72 (DT), K88, 147 to 150 (FGWD), K168, and 173 to 174 (HR).

The protein belongs to the HAM1 NTPase family. In terms of assembly, homodimer. It depends on Mg(2+) as a cofactor. The cofactor is Mn(2+).

The protein localises to the cytoplasm. Its subcellular location is the nucleus. It catalyses the reaction ITP + H2O = IMP + diphosphate + H(+). It carries out the reaction dITP + H2O = dIMP + diphosphate + H(+). The enzyme catalyses XTP + H2O = XMP + diphosphate + H(+). In terms of biological role, pyrophosphatase that hydrolyzes non-canonical purine nucleotides such as inosine triphosphate (ITP), deoxyinosine triphosphate (dITP) or xanthosine 5'-triphosphate (XTP) to their respective monophosphate derivatives. The enzyme does not distinguish between the deoxy- and ribose forms. Probably excludes non-canonical purines from RNA and DNA precursor pools, thus preventing their incorporation into RNA and DNA and avoiding chromosomal lesions. This is Inosine triphosphate pyrophosphatase from Neurospora crassa (strain ATCC 24698 / 74-OR23-1A / CBS 708.71 / DSM 1257 / FGSC 987).